Here is a 518-residue protein sequence, read N- to C-terminus: MTSTTQVLIALSSIVVAYFVKTALAKRKLNPRGLPYPPGPKGLPVIGNLTQLPQHKPWLVYKEWGRTYGDLMYLEAMGQPMIIINSLSRALDLLDKRAVNYSDRPHVPTMDLCVLMKLDWVFAFMQYGADWRNHRRAFHQYLNHNMVHNYHPIQEQETQEFLRALIARPKDFLAHTRHLFGSIIIRISYGFEDEEYNKVLVEEAEALASGFSESIIPGRYLVNAFPFLRHVPSWLPGAGFQRTMQYLRKISEKTLSEPFDNVKEALKTGNRQVGPSLAVGLIESLPDETHANRTSLEVVARNTSALSYIAGADTTVSSAQALILALAMHPEVQRKAQKEIDSVVGTDRLPNMSDKPNMPYVQAIVKEAGRWHTVLPLGFIHVSAKEDEYDGYFIPKGSFIFVNTWAIMHDPDVFKNPLQFNPERYLKNGQIDTSVLDPEAATFGFGRRICPGRWLSNDSLFLMAASLLATFNIAAPKDRTGKPIPLSLDTSSHLITAPLPYDCEFQLRSPKYAALLQK.

Residues 7–25 form a helical membrane-spanning segment; that stretch reads VLIALSSIVVAYFVKTALA. Residues Asn-48, Asn-100, Asn-292, Asn-302, and Asn-351 are each glycosylated (N-linked (GlcNAc...) asparagine). Cys-450 contributes to the heme binding site. A glycan (N-linked (GlcNAc...) asparagine) is linked at Asn-457.

It belongs to the cytochrome P450 family. Heme serves as cofactor.

It localises to the membrane. It functions in the pathway secondary metabolite biosynthesis. Cytochrome P450 monooxygenase; part of the gene cluster that mediates the biosynthesis of alpha-cuprenene and oxidized derivatives. The alpha-cuprenene synthase COP6 is the only sesquiterpene synthase identified in C.cinereus that appears to be part of a biosynthetic gene cluster and is highly specific since it catalyzes the cyclization of (2E,6E)-farnesyl diphosphate into only one product, alpha-cuprenene. The cytochrome P450 monooxygenase COX2 then oxidizes the cyclohexadiene ring of alpha-cuprenene at positions 1 and 4, yielding first alpha-cuparene, followed by alpha-cuparophenol and a further yet unidentified compound resulting from one additional oxidation step. The cytochrome P450 monooxygenase COX1 then likely catalyzes the oxidation at position 9 of the pentane ring of alpha-cuprenene to give the corresponding hydroxy or ketone derivatives. This chain is Cytochrome P450 monooxygenase COX1, found in Coprinopsis cinerea (strain Okayama-7 / 130 / ATCC MYA-4618 / FGSC 9003) (Inky cap fungus).